The following is a 276-amino-acid chain: NH(3)-dependent NAD(+) synthetase (276 aa).

Residue G43–S50 coordinates ATP. D49 lines the Mg(2+) pocket. Residue R146 coordinates deamido-NAD(+). T166 is a binding site for ATP. Residue E171 participates in Mg(2+) binding. K179 and D186 together coordinate deamido-NAD(+). Residues K195 and T217 each contribute to the ATP site. H266–K267 serves as a coordination point for deamido-NAD(+).

Belongs to the NAD synthetase family. As to quaternary structure, homodimer.

The catalysed reaction is deamido-NAD(+) + NH4(+) + ATP = AMP + diphosphate + NAD(+) + H(+). The protein operates within cofactor biosynthesis; NAD(+) biosynthesis; NAD(+) from deamido-NAD(+) (ammonia route): step 1/1. Functionally, catalyzes the ATP-dependent amidation of deamido-NAD to form NAD. Uses ammonia as a nitrogen source. This is NH(3)-dependent NAD(+) synthetase from Shewanella baltica (strain OS223).